The sequence spans 490 residues: UDP-N-acetylmuramate--L-alanine ligase (490 aa).

133 to 139 (GTHGKTS) lines the ATP pocket.

This sequence belongs to the MurCDEF family.

Its subcellular location is the cytoplasm. The enzyme catalyses UDP-N-acetyl-alpha-D-muramate + L-alanine + ATP = UDP-N-acetyl-alpha-D-muramoyl-L-alanine + ADP + phosphate + H(+). It functions in the pathway cell wall biogenesis; peptidoglycan biosynthesis. Functionally, cell wall formation. In Saccharopolyspora erythraea (strain ATCC 11635 / DSM 40517 / JCM 4748 / NBRC 13426 / NCIMB 8594 / NRRL 2338), this protein is UDP-N-acetylmuramate--L-alanine ligase.